A 273-amino-acid polypeptide reads, in one-letter code: Embryonic polyadenylate-binding protein 2 (273 aa).

Residues 22–57 (SSDPEAQGWGAWGRTEKTSLVPRAGSRAGSDKEAEE) are disordered. An RRM domain is found at 143-220 (RSVFVGNVDY…RVIKVLPKRT (78 aa)).

Its subcellular location is the cytoplasm. In terms of biological role, binds the poly(A) tail of mRNA. The polypeptide is Embryonic polyadenylate-binding protein 2 (Pabpn1l) (Mus musculus (Mouse)).